Consider the following 406-residue polypeptide: 8-amino-7-oxononanoate synthase (406 aa).

Residue R21 coordinates substrate. Pyridoxal 5'-phosphate is bound at residue 112-113 (GY). Residue H137 participates in substrate binding. Pyridoxal 5'-phosphate-binding residues include S183, H211, and T239. K242 carries the post-translational modification N6-(pyridoxal phosphate)lysine. T358 serves as a coordination point for substrate.

This sequence belongs to the class-II pyridoxal-phosphate-dependent aminotransferase family. BioF subfamily. Homodimer. It depends on pyridoxal 5'-phosphate as a cofactor.

It catalyses the reaction 6-carboxyhexanoyl-[ACP] + L-alanine + H(+) = (8S)-8-amino-7-oxononanoate + holo-[ACP] + CO2. It functions in the pathway cofactor biosynthesis; biotin biosynthesis. Catalyzes the decarboxylative condensation of pimeloyl-[acyl-carrier protein] and L-alanine to produce 8-amino-7-oxononanoate (AON), [acyl-carrier protein], and carbon dioxide. The chain is 8-amino-7-oxononanoate synthase from Burkholderia cenocepacia (strain HI2424).